A 59-amino-acid chain; its full sequence is Temporin-HN2 (59 aa).

The first 22 residues, 1-22, serve as a signal peptide directing secretion; the sequence is MFTLKKSLLLLLFLGTINLSLS. A coiled-coil region spans residues 16 to 44; it reads TINLSLSEQERDAKEERRDEMDVEVEKRN. The propeptide occupies 23 to 41; sequence EQERDAKEERRDEMDVEVE. Position 57 is a leucine amide (Leu57).

Expressed by the skin glands.

The protein localises to the secreted. In terms of biological role, has antimicrobial activity against some Gram-positive bacteria and fungi but has no activity against a range of Gram-negative bacteria except P.faecalis. Active against the Gram-positive bacteria S.aureus ATCC 25923 (MIC=4.8 uM), S.carnosus KHS (MIC=19 uM), B.licheniformis X39 (MIC=19 uM) and R.rhodochrous X15 (MIC=2.4 uM) but is inactive against E.faecium 091299 and E.faecalis 981. Has a less potent antimicrobial activity against the Gram-negative bacterium P.faecalis X29 (MIC=37.5 uM) and is inactive against E.coli, P.aeruginosa and S.typhi. Has antifungal activity against C.albicans ATCC 2002 (MIC=9.5 uM) and is also active against the slime mold 090223 (MIC=9.5 uM). Has extremely low hemolytic activity against human erythrocytes (LC(50)=300 uM). This chain is Temporin-HN2, found in Odorrana hainanensis (Odor frog).